The primary structure comprises 2925 residues: Otogelin (2925 aa).

The N-terminal stretch at 1–25 (MGVLASALCWLLCVWLPWGEQAAES) is a signal peptide. Residues 39–69 (GRSGARGMRNVKGMRNGPAQTRVSSSSSHQE) are disordered. Residues 56–69 (PAQTRVSSSSSHQE) are compositionally biased toward polar residues. In terms of domain architecture, EGF-like spans 102 to 139 (HRAKCAPSYLFSCFNGGECVHPAFCDCRRFNATGPRCQ). Intrachain disulfides connect cysteine 106/cysteine 120, cysteine 114/cysteine 126, cysteine 128/cysteine 138, cysteine 152/cysteine 285, and cysteine 199/cysteine 206. Positions 150–322 (SICRAWGQHH…SWQEQAPNQP (173 aa)) constitute a VWFD 1 domain. The disordered stretch occupies residues 316–335 (EQAPNQPPGPTTSSLPRPPC). The segment covering 326-335 (TTSSLPRPPC) has biased composition (polar residues). The VWFD 2 domain occupies 512-688 (AECSVTGDIH…NSWKTLSACS (177 aa)). 3 cysteine pairs are disulfide-bonded: cysteine 514-cysteine 652, cysteine 536-cysteine 687, and cysteine 558-cysteine 566. The 65-residue stretch at 780–844 (CEASKEYSPC…ADLCVPRNQC (65 aa)) folds into the TIL domain. N-linked (GlcNAc...) asparagine glycosylation occurs at asparagine 914. A VWFD 3 domain is found at 984 to 1152 (STCTAYGDRH…SWAAVECPDT (169 aa)). Intrachain disulfides connect cysteine 986-cysteine 1115 and cysteine 1030-cysteine 1037. The interval 1476–1540 (LGNETLPPSQ…PVVSPGPTQT (65 aa)) is disordered. An N-linked (GlcNAc...) asparagine glycan is attached at asparagine 1478. Over residues 1502–1528 (PRTPTHRPALTPAAPLTTALNPPVTAT) the composition is skewed to low complexity. Asparagine 1612 carries an N-linked (GlcNAc...) asparagine glycan. Disordered regions lie at residues 1636-1679 (GHGS…HKAV), 1693-1715 (VPQP…AGTA), and 1737-1788 (KGEA…ASLS). Polar residues predominate over residues 1650-1659 (SLTASPSSRP). Residues 1694-1708 (PQPTQAQSASSPSTP) show a composition bias toward low complexity. Residues 1751–1764 (SPQPHPLPSAPPRP) show a composition bias toward pro residues. One can recognise a VWFD 4 domain in the interval 2110 to 2289 (CRCSIFPDLS…SWQVPSSLTS (180 aa)). Disulfide bonds link cysteine 2112–cysteine 2249, cysteine 2840–cysteine 2889, cysteine 2854–cysteine 2903, cysteine 2865–cysteine 2920, and cysteine 2869–cysteine 2922. The region spanning 2840 to 2925 (CKKVTIRMTI…EPTDCACQWS (86 aa)) is the CTCK domain.

This sequence belongs to the otogelin family. N-glycosylated. Not O-glycosylated.

The protein localises to the apical cell membrane. It localises to the secreted. It is found in the extracellular space. In terms of biological role, glycoprotein specific to acellular membranes of the inner ear. May be required for the anchoring of the otoconial membranes and cupulae to the underlying neuroepithelia in the vestibule. May be involved in the organization and/or stabilization of the fibrillar network that compose the tectorial membrane in the cochlea. May play a role in mechanotransduction processes. In Homo sapiens (Human), this protein is Otogelin (OTOG).